A 197-amino-acid chain; its full sequence is MYB-like transcription factor EOBII (197 aa).

2 HTH myb-type domains span residues 10–62 (DAEV…LNYL) and 63–117 (RPDV…QKHI). 2 consecutive DNA-binding regions (H-T-H motif) follow at residues 38–62 (WNSL…LNYL) and 90–113 (WSKI…RTRI). A disordered region spans residues 125-158 (GQAASSEQNDHQEACTSQMSNGPNDNTIDQTYSP). Residues 138–158 (ACTSQMSNGPNDNTIDQTYSP) show a composition bias toward polar residues.

As to expression, specifically expressed in flowers, mostly in stigmas, petal tubes and petal limbs, and, to a lower extent, in anthers and stamen. Also present at low levels in roots, stems, leaves and sepals.

It localises to the nucleus. In terms of biological role, MYB-type transcription factor controlling the production of volatile organic compounds (VOCs), including floral volatile benzenoids and phenylpropanoids (FVBP), in flowers of fragrant cultivars (e.g. cv. Mitchell and cv. V26) by regulating the expression of ODO1 and EOBI, key regulators of the shikimate pathway, and of several biosynthetic floral scent-related genes including IGS, PAL2 and CFAT. This scent, mostly produced in the evening and night by the petals, attracts the pollinators (e.g. the night-active hawkmoth pollinator Manduca sexta). Binds to and activates the ODO1 and EOBI promoters via MYB binding sites (MBS) 5'-AAACCTAAT-3' and 5'-CTAACT-3'. Regulates the promoters of IGS1, CFAT and PAL2. Controls flowers petal opening by modulating a global transcriptomic switch. This is MYB-like transcription factor EOBII from Petunia hybrida (Petunia).